The chain runs to 670 residues: Sodium/glucose cotransporter 2 (670 aa).

Over 1 to 20 (MEGHVEEGSELGEQKVLIDN) the chain is Extracellular. The helical transmembrane segment at 21 to 42 (PADILVIAAYFLLVIGVGLWSM) threads the bilayer. The Cytoplasmic segment spans residues 43–61 (FRTNRGTVGGYFLAGRSMV). The helical transmembrane segment at 62–83 (WWPVGASLFASNIGSGHFVGLA) threads the bilayer. Positions 71 and 74 each coordinate Na(+). Over 84–91 (GTGAASGL) the chain is Extracellular. The helical transmembrane segment at 92 to 112 (AVAGFEWNALFVVLLLGWLFV) threads the bilayer. Residues 113-134 (PVYLTAGVITMPQYLRKRFGGR) are Cytoplasmic-facing. Residues 135 to 164 (RIRLYLSVLSLFLYIFTKISVDMFSGAVFI) form a helical membrane-spanning segment. Over 165-171 (QQALGWN) the chain is Extracellular. Transmembrane regions (helical) follow at residues 172 to 193 (IYAS…GGLA) and 194 to 215 (ALMY…ILTG). Topologically, residues 216–273 (YAFHEVGGYSGLFDKYLGAVTSLTVSKDPAVGNISSTCYQPRPDSYHLLRDPVTGGLP) are extracellular. Residue Asn248 is glycosylated (N-linked (GlcNAc...) asparagine). 4 disulfide bridges follow: Cys253/Cys509, Cys343/Cys349, Cys353/Cys359, and Cys515/Cys520. A helical membrane pass occupies residues 274–293 (WPALLLGLTIVSGWHWCSDQ). Residues 294–307 (VIVQRCLAGKNLTH) lie on the Cytoplasmic side of the membrane. Residues 308–329 (IKAGCILCGYLKLMPMFLMVMP) form a helical membrane-spanning segment. The Extracellular portion of the chain corresponds to 330–373 (GMISRILYPDEVACVVPEVCKRVCGTEVGCSNIAYPRLVVKLMP). A helical membrane pass occupies residues 374–404 (NGLRGLMLAVMLAALMSSLASIFNSSSTLFT). Na(+)-binding residues include Ala387, Ser390, and Ser391. Topologically, residues 405–422 (MDIYTRLRPRAGDRELLL) are cytoplasmic. The chain crosses the membrane as a helical span at residues 423-444 (VGRLWVVFIVAVSVAWLPVVQA). Topologically, residues 445–449 (AQGGQ) are extracellular. The helical transmembrane segment at 450-475 (LFDYIQSVSSYLAPPVSAVFVLALFV) threads the bilayer. Over 476-480 (PRVNE) the chain is Cytoplasmic. The chain crosses the membrane as a helical span at residues 481 to 503 (KGAFWGLIGGLLMGLARLIPEFF). At 504 to 521 (FGTGSCVRPSACPAIFCR) the chain is on the extracellular side. Residues 522-545 (VHYLYFAIILFFCSGFLTLAISRC) form a helical membrane-spanning segment. Residues 546 to 649 (TAPIPQKHLH…DISEDPSWAR (104 aa)) are Cytoplasmic-facing. A helical membrane pass occupies residues 650–668 (VVNLNALLMMTVAVFLWGF). Over 669-670 (YA) the chain is Extracellular.

This sequence belongs to the sodium:solute symporter (SSF) (TC 2.A.21) family. In terms of assembly, forms a heterodimer (via TM13) with PDZK1IP1 (via N-terminal transmembrane helix); this interaction enhances SLC5A2 transporter activity. In terms of processing, glycosylated at a single site. In terms of tissue distribution, kidney, in proximal tubule S1 segments.

The protein resides in the apical cell membrane. The catalysed reaction is D-glucose(out) + Na(+)(out) = D-glucose(in) + Na(+)(in). With respect to regulation, enhanced by the interaction with PDZK1IP1/MAP17. Functionally, electrogenic Na(+)-coupled sugar symporter that actively transports D-glucose at the plasma membrane, with a Na(+) to sugar coupling ratio of 1:1. Transporter activity is driven by a transmembrane Na(+) electrochemical gradient set by the Na(+)/K(+) pump. Unlike SLC5A1/SGLT1, requires the auxiliary protein PDZK1IP1/MAP17 for full transporter activity. Has a primary role in D-glucose reabsorption from glomerular filtrate across the brush border of the early proximal tubules of the kidney. This Rattus norvegicus (Rat) protein is Sodium/glucose cotransporter 2 (Slc5a2).